The following is a 385-amino-acid chain: Cell division protein FtsZ (385 aa).

Residues 37-41, 125-127, E156, K160, and D204 each bind GTP; these read GGGSN and GTG.

It belongs to the FtsZ family. In terms of assembly, homodimer. Polymerizes to form a dynamic ring structure in a strictly GTP-dependent manner. Interacts directly with several other division proteins.

The protein resides in the cytoplasm. Functionally, essential cell division protein that forms a contractile ring structure (Z ring) at the future cell division site. The regulation of the ring assembly controls the timing and the location of cell division. One of the functions of the FtsZ ring is to recruit other cell division proteins to the septum to produce a new cell wall between the dividing cells. Binds GTP and shows GTPase activity. The polypeptide is Cell division protein FtsZ (Helicobacter pylori (strain ATCC 700392 / 26695) (Campylobacter pylori)).